The chain runs to 30 residues: M-poneritoxin-Nc3a (30 aa).

It belongs to the ponericin-G family. As to expression, expressed by the venom gland.

It localises to the secreted. The protein resides in the target cell membrane. Its function is as follows. Membrane-perturbating peptide with multiple activities. It is insecticidal, since it induces contractile paralysis in insects (L.cuprina) during several hours and death after 24 hours. It shows a relatively strong and broad-spectrum antibacterial activity against both Gram-positive and Gram-negative bacteria (MIC&lt;20 uM). It is also antiparasitic, since it potently inhibits the larval development of the major pathogenic nematode of ruminants (H.contortus, IC(50)=5.6 uM) and reduces the motility of adult males of the other nematode B.malayi. It also shows cytotoxic activity against HEK293 cells (EC(50)=5-7 uM) but does not induce hemolysis in human erythrocytes. In addition, it causes a moderate increase in intracellular calcium concentration on neuronal and epithelial cell lines, which supports a non-specific membrane perturbation mechanism of action. In vivo, it induces pain by intraplantar injection into mice, suggesting a defensive function against vertebrate predators. The protein is M-poneritoxin-Nc3a of Neoponera commutata (Large hunting ant).